The sequence spans 271 residues: 5-amino-6-(5-phospho-D-ribitylamino)uracil phosphatase YbjI (271 aa).

Asp-9 acts as the Nucleophile in catalysis. Residue Asp-9 participates in Mg(2+) binding. Met-10 is a binding site for phosphate. Asp-11 is a binding site for Mg(2+). Phosphate contacts are provided by residues 44–45 (SG) and Lys-192. Position 215 (Asp-215) interacts with Mg(2+). A phosphate-binding site is contributed by Asn-218.

Belongs to the HAD-like hydrolase superfamily. Cof family. Requires Mg(2+) as cofactor. Mn(2+) serves as cofactor. Co(2+) is required as a cofactor. It depends on Zn(2+) as a cofactor.

It catalyses the reaction 5-amino-6-(5-phospho-D-ribitylamino)uracil + H2O = 5-amino-6-(D-ribitylamino)uracil + phosphate. The protein operates within cofactor biosynthesis; riboflavin biosynthesis; 5-amino-6-(D-ribitylamino)uracil from GTP: step 4/4. Functionally, catalyzes the dephosphorylation of 5-amino-6-(5-phospho-D-ribitylamino)uracil, and thus could be involved in the riboflavin biosynthesis pathway. Is also able to dephosphorylate flavin mononucleotide (FMN), erythrose 4-phosphate and other phosphoric acid esters. The polypeptide is 5-amino-6-(5-phospho-D-ribitylamino)uracil phosphatase YbjI (ybjI) (Escherichia coli (strain K12)).